The chain runs to 475 residues: Glycogen synthase (475 aa).

Position 15 (K15) interacts with ADP-alpha-D-glucose.

This sequence belongs to the glycosyltransferase 1 family. Bacterial/plant glycogen synthase subfamily.

The catalysed reaction is [(1-&gt;4)-alpha-D-glucosyl](n) + ADP-alpha-D-glucose = [(1-&gt;4)-alpha-D-glucosyl](n+1) + ADP + H(+). Its pathway is glycan biosynthesis; glycogen biosynthesis. In terms of biological role, synthesizes alpha-1,4-glucan chains using ADP-glucose. The sequence is that of Glycogen synthase from Anaeromyxobacter sp. (strain K).